The primary structure comprises 56 residues: Alpha-pompilidotoxin (56 aa).

A signal peptide spans 1–22; it reads MFKQLILLALAAVFLLINISSA. Positions 23–42 are excised as a propeptide; sequence EPAAEPNANAEPLAEASAEP. L55 bears the Leucine amide mark.

In terms of tissue distribution, expressed by the venom gland.

The protein resides in the secreted. Inhibits sodium channels (Nav) inactivation. Shows two types of inhibitory activities on channels. Inhibition of hNav1.6/SCN8A shows a large increase in the steady-state current component without any increase in the slow component, whereas inhibition of hNav1.1/SCN1A, hNav1.2/SCN2A, hNav1.3/SCN3A and hNav1.7/SCN9A shows a large increase in the slow component with only a small steady-state component. Is 5-fold less potent than beta-PMTX for inducing repetitive action potentials in lobster neuromuscular junctions. The polypeptide is Alpha-pompilidotoxin (Anoplius samariensis (Solitary wasp)).